The following is a 251-amino-acid chain: Zinc import ATP-binding protein ZnuC (251 aa).

Positions 5–220 (VSLENVSVSF…PEFISMFGPR (216 aa)) constitute an ABC transporter domain. An ATP-binding site is contributed by 37–44 (GPNGAGKS).

Belongs to the ABC transporter superfamily. Zinc importer (TC 3.A.1.15.5) family. As to quaternary structure, the complex is composed of two ATP-binding proteins (ZnuC), two transmembrane proteins (ZnuB) and a solute-binding protein (ZnuA).

Its subcellular location is the cell inner membrane. The enzyme catalyses Zn(2+)(out) + ATP(in) + H2O(in) = Zn(2+)(in) + ADP(in) + phosphate(in) + H(+)(in). In terms of biological role, part of the ABC transporter complex ZnuABC involved in zinc import. Responsible for energy coupling to the transport system. The sequence is that of Zinc import ATP-binding protein ZnuC from Shigella dysenteriae serotype 1 (strain Sd197).